Consider the following 223-residue polypeptide: MEELAHPYVPRDLNLPGYVPISMSMSSIVSIYLGSSLLVVSLVWLLFGRKKAKLDKLLMCWWTFTGLTHVILEGYFVFSPEFFKDNTSAYLAEVWKEYSKGDSRYVGRDSAVVSVEGITAVIVGPASLLAIYAIAKEKSYSYVLQLAISVCQLYGCLVYFITAILEGDNFATNSFYYYSYYIGANCWWVLIPSLISFRCWKKICAAAAIANNNVETKTKKKTR.

4 consecutive transmembrane segments (helical) span residues 28–48 (IVSI…LLFG), 58–78 (LMCW…YFVF), 115–135 (VEGI…YAIA), and 175–195 (FYYY…PSLI). In terms of domain architecture, EXPERA spans 54–196 (LDKLLMCWWT…WWVLIPSLIS (143 aa)).

It belongs to the EBP family.

Its subcellular location is the endoplasmic reticulum membrane. The enzyme catalyses lathosterol = 5alpha-cholest-8-en-3beta-ol. It participates in steroid biosynthesis; sterol biosynthesis. In terms of biological role, catalyzes the conversion of Delta(8)-sterols to their corresponding Delta(7)-isomers. The sequence is that of Probable 3-beta-hydroxysteroid-Delta(8),Delta(7)-isomerase from Arabidopsis thaliana (Mouse-ear cress).